We begin with the raw amino-acid sequence, 299 residues long: UBX domain-containing protein 1 (299 aa).

3 disordered regions span residues alanine 39–proline 61, lysine 127–glutamate 176, and glutamate 191–lysine 218. Positions aspartate 46 to proline 61 are enriched in low complexity. Residues alanine 111–arginine 179 are a coiled coil. The segment covering alanine 128–glutamate 176 has biased composition (basic and acidic residues). A compositionally biased stretch (low complexity) spans proline 201–proline 213. The UBX domain occupies lysine 218 to leucine 295.

As to quaternary structure, interacts with cdc-48.1 (via N-terminus) and cdc-48.2 (via N-terminus) in vitro; the interaction with cdc-48.1 is not detected in vivo. Expressed in the germline (at protein level). Expressed in spermatocytes but not in mature sperm (at protein level). Ubiquitously expressed. Predominantly expressed in the spermatheca.

It localises to the cytoplasm. The protein localises to the perinuclear region. In terms of biological role, ubiquitin-binding protein which acts as an adapter for ATPase cdc-48.1 and/or cdc-48.2, conferring substrate specificity. Together with ubxn-2 and ubxn-3, plays a role in hermaphrodite spermatogenesis probably by promoting the degradation of sex determination terminal factor tra-1. In Caenorhabditis elegans, this protein is UBX domain-containing protein 1.